The primary structure comprises 412 residues: Cysteine desulfurase (412 aa).

K231 is modified (N6-(pyridoxal phosphate)lysine). The active-site Cysteine persulfide intermediate is the C369.

The protein belongs to the class-V pyridoxal-phosphate-dependent aminotransferase family. Csd subfamily. Homodimer. Interacts with SufE and the SufBCD complex composed of SufB, SufC and SufD. The interaction with SufE is required to mediate the direct transfer of the sulfur atom from the S-sulfanylcysteine. Pyridoxal 5'-phosphate is required as a cofactor.

The protein localises to the cytoplasm. It catalyses the reaction (sulfur carrier)-H + L-cysteine = (sulfur carrier)-SH + L-alanine. The enzyme catalyses L-selenocysteine + AH2 = hydrogenselenide + L-alanine + A + H(+). Its pathway is cofactor biosynthesis; iron-sulfur cluster biosynthesis. Its function is as follows. Cysteine desulfurases mobilize the sulfur from L-cysteine to yield L-alanine, an essential step in sulfur metabolism for biosynthesis of a variety of sulfur-containing biomolecules. Component of the suf operon, which is activated and required under specific conditions such as oxidative stress and iron limitation. Acts as a potent selenocysteine lyase in vitro, that mobilizes selenium from L-selenocysteine. Selenocysteine lyase activity is however unsure in vivo. The sequence is that of Cysteine desulfurase (sufS) from Dickeya dadantii (strain 3937) (Erwinia chrysanthemi (strain 3937)).